A 188-amino-acid polypeptide reads, in one-letter code: Small ribosomal subunit protein uS7 (188 aa).

Belongs to the universal ribosomal protein uS7 family. Part of the 30S ribosomal subunit.

In terms of biological role, one of the primary rRNA binding proteins, it binds directly to 16S rRNA where it nucleates assembly of the head domain of the 30S subunit. Is located at the subunit interface close to the decoding center. The protein is Small ribosomal subunit protein uS7 of Methanococcus aeolicus (strain ATCC BAA-1280 / DSM 17508 / OCM 812 / Nankai-3).